The following is a 274-amino-acid chain: 4-deoxy-L-threo-5-hexosulose-uronate ketol-isomerase (274 aa).

Zn(2+) contacts are provided by His-192, His-194, Glu-199, and His-241.

It belongs to the KduI family. Zn(2+) serves as cofactor.

It carries out the reaction 5-dehydro-4-deoxy-D-glucuronate = 3-deoxy-D-glycero-2,5-hexodiulosonate. It functions in the pathway glycan metabolism; pectin degradation; 2-dehydro-3-deoxy-D-gluconate from pectin: step 4/5. Catalyzes the isomerization of 5-dehydro-4-deoxy-D-glucuronate to 3-deoxy-D-glycero-2,5-hexodiulosonate. The chain is 4-deoxy-L-threo-5-hexosulose-uronate ketol-isomerase from Cereibacter sphaeroides (strain ATCC 17025 / ATH 2.4.3) (Rhodobacter sphaeroides).